Reading from the N-terminus, the 309-residue chain is Replication factor C subunit 4 (309 aa).

ATP contacts are provided by residues V5, V17, 42-50 (GPPGTGKTT), N134, and R192.

This sequence belongs to the activator 1 small subunits family. As to quaternary structure, component of the replication factor C (RFC) complex.

It localises to the nucleus. In terms of biological role, component of ATP-dependent clamp loader (RFC and RFC-like) complexes for DNA clamps. During a clamp loading circle, the RFC:clamp complex binds to DNA and the recognition of the double-stranded/single-stranded junction stimulates ATP hydrolysis by RFC. The complex presumably provides bipartite ATP sites in which one subunit supplies a catalytic site for hydrolysis of ATP bound to the neighboring subunit. Dissociation of RFC from the clamp leaves the clamp encircling DNA. Component of the replication factor C (RFC or activator 1) complex which acts during elongation of primed DNA templates by DNA polymerase delta and epsilon. RFC has an essential but redundant activity in sister chromatid cohesion establishment. This is Replication factor C subunit 4 (RFC4) from Encephalitozoon cuniculi (strain GB-M1) (Microsporidian parasite).